Reading from the N-terminus, the 960-residue chain is Leucine-rich repeat receptor-like serine/threonine-protein kinase SKM1 (960 aa).

The first 29 residues, 1–29, serve as a signal peptide directing secretion; the sequence is MSTSHHHHHPPYLITTLFFLFLNFSCLHA. Over 30-634 the chain is Extracellular; sequence NELELLLSFK…VRKRSTKSWW (605 aa). C61 and C68 are joined by a disulfide. N-linked (GlcNAc...) asparagine glycans are attached at residues N70, N83, N103, N108, N129, and N134. LRR repeat units lie at residues 71-96, 97-120, 122-146, 149-168, 169-194, 196-216, 217-240, 241-264, 265-288, 290-312, 313-336, 338-360, 361-384, 386-408, 409-432, 434-454, 455-477, 478-501, 503-525, 526-549, 550-573, and 575-598; these read ISRV…TFRL, PFLQ…IFTT, SPSL…FLPN, TLDL…IGVF, SNLR…NLSR, EFLT…LGKM, KNLK…IGGL, SSLN…LGDL, KKLE…IFSL, NLIS…VAQM, QSLE…VTSL, RLKV…LGKH, NNLT…LCDS, HLTK…LGMC, QSLE…FTKL, LVNF…TWDM, PQLE…FSRS, KRLK…LMTF, EIMD…LSSC, KNLV…FAEF, QVLS…LGNI, and SLVQ…AFLA. A glycan (N-linked (GlcNAc...) asparagine) is linked at N191. The CLE45 peptide binding motif lies at 221 to 226; it reads WIYLGY. N-linked (GlcNAc...) asparagine glycosylation is found at N228 and N252. N-linked (GlcNAc...) asparagine glycosylation occurs at N324. N-linked (GlcNAc...) asparagine glycans are attached at residues N362 and N372. Residue N537 is glycosylated (N-linked (GlcNAc...) asparagine). Residues N580 and N600 are each glycosylated (N-linked (GlcNAc...) asparagine). A helical membrane pass occupies residues 635 to 655; it reads LIITSTFAAFLAVLVSGFFIV. Residues 656-960 lie on the Cytoplasmic side of the membrane; the sequence is LVFQRTHNVL…TYLSKILSLA (305 aa). The Protein kinase domain occupies 691–953; the sequence is FTVNTILSSL…SSSSSCTTYL (263 aa). T692 is modified (phosphothreonine). Residues 697–705 and K717 contribute to the ATP site; that span reads LSSLKDQNV. The residue at position 834 (Y834) is a Phosphotyrosine.

The protein belongs to the protein kinase superfamily. Ser/Thr protein kinase family. In terms of assembly, self-interacts. Binds to CLE45 present in the pistil, particularly under relatively high temperature (at 30 degrees Celsius). Expressed in pollen grains and roots vascular tissues. Present in roots.

The protein resides in the cell membrane. It catalyses the reaction L-seryl-[protein] + ATP = O-phospho-L-seryl-[protein] + ADP + H(+). It carries out the reaction L-threonyl-[protein] + ATP = O-phospho-L-threonyl-[protein] + ADP + H(+). Its function is as follows. Receptor with a serine/threonine-protein kinase activity. Together with SKM2, LRR-rich receptor-like kinase (LRR-RLK) required for male fertility by the perception of CLE43 and CLE45 peptides and the transduction of their promoting action in pollen tubes, especially under relatively high temperature (at 30 degrees Celsius), thus conferring tolerance against high temperature probably through the maintenance of mitochondrial activity. Seems to not be involved in the perception of CLE45 peptide in roots. The sequence is that of Leucine-rich repeat receptor-like serine/threonine-protein kinase SKM1 from Arabidopsis thaliana (Mouse-ear cress).